Reading from the N-terminus, the 467-residue chain is Abscisic acid 8'-hydroxylase 1 (467 aa).

The helical transmembrane segment at A5–I24 threads the bilayer. C411 is a binding site for heme.

The protein belongs to the cytochrome P450 family. Heme serves as cofactor. Mainly expressed in flowers, siliques, roots and stems. Lower expression in rosette leaves and dry seeds. Expressed in vascular tissues of embryo during the seed development.

The protein localises to the membrane. It catalyses the reaction 2-cis-(+)-abscisate + reduced [NADPH--hemoprotein reductase] + O2 = (+)-8'-hydroxyabscisate + oxidized [NADPH--hemoprotein reductase] + H2O + H(+). It functions in the pathway plant hormone degradation; abscisic acid degradation. In terms of biological role, involved in the oxidative degradation of abscisic acid. Plays an important role in determining abscisic acid levels in dry seeds and in the control of postgermination growth. This chain is Abscisic acid 8'-hydroxylase 1 (CYP707A1), found in Arabidopsis thaliana (Mouse-ear cress).